The chain runs to 286 residues: Leukocyte cell-derived chemotaxin 1 (286 aa).

The chain crosses the membrane as a helical span at residues 29 to 49; sequence LVAFIAGAALLLFGGVGAFYL. The 83-residue stretch at 75 to 157 folds into the BRICHOS domain; sequence DSAEGTIVEV…FCADLPIYWH (83 aa). Cysteines 102 and 149 form a disulfide. The propeptide occupies 166 to 169; that stretch reads RKRR. Positions 166–176 are enriched in basic residues; sequence RKRRSATRMRR. The disordered stretch occupies residues 166 to 220; that stretch reads RKRRSATRMRRQTSAGVNRQPARRRNSTASARDERPTGPEYNPENPYHQNQGSEG. N191 carries an N-linked (GlcNAc...) asparagine glycan. Disulfide bonds link C234–C238, C235–C275, C245–C269, and C249–C265.

The protein belongs to the chondromodulin-1 family. Post-translationally, after cleavage, the post-translationally modified ChM-I is secreted as a glycoprotein.

The protein localises to the secreted. It is found in the extracellular space. Its subcellular location is the extracellular matrix. It localises to the endomembrane system. Its function is as follows. Bifunctional growth regulator. May contribute to the rapid growth of cartilage and vascular invasion prior to the replacement of cartilage by bone during endochondral bone development. Plays a role as antiangiogenic factor in cardiac valves to suppress neovascularization. The protein is Leukocyte cell-derived chemotaxin 1 of Danio rerio (Zebrafish).